A 337-amino-acid polypeptide reads, in one-letter code: Geranylgeranyl pyrophosphate synthase subD (337 aa).

Residues Lys53, Arg56, and His85 each contribute to the isopentenyl diphosphate site. Residues Asp92 and Asp96 each contribute to the Mg(2+) site. Residue Arg101 participates in dimethylallyl diphosphate binding. Arg102 contacts isopentenyl diphosphate. Lys179, Thr180, and Gln219 together coordinate dimethylallyl diphosphate. Asp222 contributes to the Mg(2+) binding site. Asn226, Lys236, and Lys246 together coordinate dimethylallyl diphosphate.

The protein belongs to the FPP/GGPP synthase family. It depends on Mg(2+) as a cofactor.

It catalyses the reaction isopentenyl diphosphate + dimethylallyl diphosphate = (2E)-geranyl diphosphate + diphosphate. The catalysed reaction is isopentenyl diphosphate + (2E)-geranyl diphosphate = (2E,6E)-farnesyl diphosphate + diphosphate. It carries out the reaction isopentenyl diphosphate + (2E,6E)-farnesyl diphosphate = (2E,6E,10E)-geranylgeranyl diphosphate + diphosphate. It participates in secondary metabolite biosynthesis; terpenoid biosynthesis. Its function is as follows. Geranylgeranyl pyrophosphate synthase; part of the gene cluster that mediates the biosynthesis of the immunosuppressants subglutinols, meroterpenoids consisting of an alpha-pyrone (4-hydroxy-5,6-dimethyl-2-pyrone) moiety attached to a decalin core fused to a five-membered cyclic ether carrying a prenylside chain. The first step of the pathway is the synthesis of the alpha-pyrone moiety by the polyketide synthase subA via condensation of one acetyl-CoA starter unit with 3 malonyl-CoA units and 2 methylations. The alpha-pyrone is then combined with geranylgeranyl pyrophosphate (GGPP) formed by the GGPP synthase subD through the action of the prenyltransferase subC to yield a linear alpha-pyrone diterpenoid. Subsequent steps in the subglutinol biosynthetic pathway involve the decalin core formation, which is thought to be initiated by the epoxidation of the C10-C11 olefin by the FAD-dependent oxidoreductase subE. The following cyclization cascade would be catalyzed by the terpene cyclase subB. Lastly, the FAD-dependent dehydrogenase subF probably catalyzes the five-membered cyclic ether formation to complete the formation of subglutinol A. Subsequent redox reactions appear to give rise to subglutinol C and D, however, it remains unclear which enzymes are responsible for these transformations. SubD may have secondary function in the conversion of the identified subglutinols to subglutinol analog 45, which seems to be the major product of the cluster. In Metarhizium robertsii (strain ARSEF 23 / ATCC MYA-3075) (Metarhizium anisopliae (strain ARSEF 23)), this protein is Geranylgeranyl pyrophosphate synthase subD.